A 197-amino-acid polypeptide reads, in one-letter code: Nucleoid occlusion factor SlmA (197 aa).

The 61-residue stretch at 7-67 (ISRREHILQC…GLIEFIEDSL (61 aa)) folds into the HTH tetR-type domain. A DNA-binding region (H-T-H motif) is located at residues 30-49 (TTAKLAAEVGVSEAALYRHF).

Belongs to the nucleoid occlusion factor SlmA family. As to quaternary structure, homodimer. Interacts with FtsZ.

The protein resides in the cytoplasm. The protein localises to the nucleoid. Required for nucleoid occlusion (NO) phenomenon, which prevents Z-ring formation and cell division over the nucleoid. Acts as a DNA-associated cell division inhibitor that binds simultaneously chromosomal DNA and FtsZ, and disrupts the assembly of FtsZ polymers. SlmA-DNA-binding sequences (SBS) are dispersed on non-Ter regions of the chromosome, preventing FtsZ polymerization at these regions. This Shewanella amazonensis (strain ATCC BAA-1098 / SB2B) protein is Nucleoid occlusion factor SlmA.